The primary structure comprises 83 residues: U1-theraphotoxin-Hs1f (83 aa).

The N-terminal stretch at 1–21 (MKVTLIAILTCAAVLVLHTTA) is a signal peptide. The propeptide occupies 22-48 (AEELEESQLMEVGMPDTELAAVDEERL). Cystine bridges form between cysteine 51/cysteine 64, cysteine 55/cysteine 75, and cysteine 69/cysteine 80.

Belongs to the neurotoxin 12 (Hwtx-2) family. 02 (Hwtx-2) subfamily. In terms of tissue distribution, expressed by the venom gland.

It localises to the secreted. Functionally, lethal neurotoxin that blocks neuromuscular transmission. The protein is U1-theraphotoxin-Hs1f of Cyriopagopus schmidti (Chinese bird spider).